Reading from the N-terminus, the 1873-residue chain is Voltage-dependent L-type calcium channel subunit alpha-1S (1873 aa).

Residues 1–23 form a disordered region; it reads MEPSSPQDEGLRKKQPKKPLPEV. Residues 1-51 are Cytoplasmic-facing; the sequence is MEPSSPQDEGLRKKQPKKPLPEVLPRPPRALFCLTLQNPLRKACISIVEWK. The I repeat unit spans residues 38 to 337; sequence NPLRKACISI…LVLGVLSGEF (300 aa). The chain crosses the membrane as a helical span at residues 52–70; that stretch reads PFETIILLTIFANCVALAV. Residues 71–85 lie on the Extracellular side of the membrane; the sequence is YLPMPEDDNNSLNLG. N79 carries N-linked (GlcNAc...) asparagine glycosylation. Residues 86 to 106 traverse the membrane as a helical segment; it reads LEKLEYFFLTVFSIEAAMKII. Topologically, residues 107 to 115 are cytoplasmic; it reads AYGFLFHQD. Residues 116 to 136 form a helical membrane-spanning segment; sequence AYLRSGWNVLDFIIVFLGVFT. Topologically, residues 137-160 are extracellular; it reads AILEQVNVIQSNTAPMSSKGAGLD. The helical transmembrane segment at 161–179 threads the bilayer; it reads VKALRAFRVLRPLRLVSGV. Topologically, residues 180–196 are cytoplasmic; that stretch reads PSLQVVLNSIFKAMLPL. Residues 197-218 form a helical membrane-spanning segment; sequence FHIALLVLFMVIIYAIIGLELF. Over 219 to 279 the chain is Extracellular; it reads KGKMHKTCYY…HGITHFDNFG (61 aa). Cystine bridges form between C226/C254 and C245/C261. N257 is a glycosylation site (N-linked (GlcNAc...) asparagine). Residues 280–301 constitute an intramembrane region (pore-forming); it reads FSMLTVYQCITMEGWTDVLYWV. The Selectivity filter of repeat I motif lies at 290 to 293; sequence TMEG. Residue E292 participates in Ca(2+) binding. At 302–309 the chain is on the extracellular side; that stretch reads NDAIGNEW. The chain crosses the membrane as a helical span at residues 310–330; sequence PWIYFVTLILLGSFFILNLVL. Residues 331-432 lie on the Cytoplasmic side of the membrane; sequence GVLSGEFTKE…WKCHDLVKSR (102 aa). The segment at 357-374 is binding to the beta subunit; the sequence is QQLEEDLRGYMSWITQGE. Phosphoserine is present on residues S393 and S397. The II repeat unit spans residues 418-664; that stretch reads NRVFRWKCHD…VFLAIAVDNL (247 aa). A helical transmembrane segment spans residues 433–451; the sequence is VFYWLVILIVALNTLSIAS. Over 452 to 462 the chain is Extracellular; that stretch reads EHHNQPLWLTH. The helical transmembrane segment at 463-483 threads the bilayer; sequence LQDIANRVLLSLFTIEMLLKM. The Cytoplasmic segment spans residues 484–494; the sequence is YGLGLRQYFMS. Residues 495-514 form a helical membrane-spanning segment; sequence IFNRFDCFVVCSGILELLLV. Over 515–523 the chain is Extracellular; it reads ESGAMTPLG. A helical transmembrane segment spans residues 524–542; it reads ISVLRCIRLLRLFKITKYW. The Cytoplasmic portion of the chain corresponds to 543 to 561; sequence TSLSNLVASLLNSIRSIAS. Residues 562–581 form a helical membrane-spanning segment; the sequence is LLLLLFLFIIIFALLGMQLF. Topologically, residues 582–601 are extracellular; the sequence is GGRYDFEDTEVRRSNFDNFP. The segment at residues 602 to 623 is an intramembrane region (pore-forming); that stretch reads QALISVFQVLTGEDWNSVMYNG. The short motif at 612-615 is the Selectivity filter of repeat II element; that stretch reads TGED. A Ca(2+)-binding site is contributed by E614. The Extracellular segment spans residues 624–633; the sequence is IMAYGGPSYP. A helical membrane pass occupies residues 634 to 653; sequence GVLVCIYFIILFVCGNYILL. The Cytoplasmic segment spans residues 654–799; the sequence is NVFLAIAVDN…VLCHRIVNAT (146 aa). 2 disordered regions span residues 673-717 and 731-757; these read AQKA…IPTT and EVKDPYPSADFPGDDEEDEPEIPVSPR. At S687 the chain carries Phosphoserine; by PKA. A compositionally biased stretch (basic and acidic residues) spans 690-711; sequence LPDKTEEEKSVMAKKLEQKPKG. A compositionally biased stretch (acidic residues) spans 742 to 751; sequence PGDDEEDEPE. An interaction with STAC, STAC2 and STAC3 (via SH3 domains) region spans residues 747 to 760; it reads EDEPEIPVSPRPRP. One copy of the III repeat lies at 786-1068; the sequence is NKVRVLCHRI…IFVGFVIVTF (283 aa). Residues 800-818 form a helical membrane-spanning segment; sequence WFTNFILLFILLSSAALAA. At 819–830 the chain is on the extracellular side; it reads EDPIRAESVRNQ. The chain crosses the membrane as a helical span at residues 831–850; that stretch reads ILGYFDIAFTSVFTVEIVLK. Residues 851-866 lie on the Cytoplasmic side of the membrane; sequence MTTYGAFLHKGSFCRN. The helical transmembrane segment at 867–885 threads the bilayer; that stretch reads YFNILDLLVVAVSLISMGL. Topologically, residues 886–892 are extracellular; the sequence is ESSTISV. The helical transmembrane segment at 893-911 threads the bilayer; sequence VKILRVLRVLRPLRAINRA. At 912–930 the chain is on the cytoplasmic side; the sequence is KGLKHVVQCVFVAIRTIGN. Residues 931-950 form a helical membrane-spanning segment; that stretch reads IVLVTTLLQFMFACIGVQLF. Residues 951 to 1000 are Extracellular-facing; that stretch reads KGKFFSCNDLSKMTEEECRGYYYVYKDGDPTQMELRPRQWIHNDFHFDNV. C957 and C968 are joined by a disulfide. The segment at 988-1077 is dihydropyridine binding; it reads RQWIHNDFHF…FQEQGETEYK (90 aa). The segment at residues 1001–1021 is an intramembrane region (pore-forming); it reads LSAMMSLFTVSTFEGWPQLLY. Positions 1012 to 1015 match the Selectivity filter of repeat III motif; sequence TFEG. E1014 provides a ligand contact to Ca(2+). Residues 1022-1038 are Extracellular-facing; sequence RAIDSNEEDMGPVYNNR. The chain crosses the membrane as a helical span at residues 1039–1060; sequence VEMAIFFIIYIILIAFFMMNIF. Residues 1061–1118 lie on the Cytoplasmic side of the membrane; that stretch reads VGFVIVTFQEQGETEYKNCELDKNQRQCVQYALKARPLRCYIPKNPYQYQVWYVVTSS. One copy of the IV repeat lies at 1105–1384; that stretch reads NPYQYQVWYV…LFVAVIMDNF (280 aa). Residues 1119–1140 form a helical membrane-spanning segment; the sequence is YFEYLMFALIMLNTICLGMQHY. At 1141-1148 the chain is on the extracellular side; sequence HQSEEMNH. The helical transmembrane segment at 1149-1170 threads the bilayer; the sequence is ISDILNVAFTIIFTLEMILKLL. Over 1171–1180 the chain is Cytoplasmic; it reads AFKARGYFGD. Residues 1181-1200 form a helical membrane-spanning segment; the sequence is PWNVFDFLIVIGSIIDVILS. The Extracellular segment spans residues 1201–1231; it reads EIDTFLASSGGLYCLGGGCGNVDPDESARIS. The chain crosses the membrane as a helical span at residues 1232–1250; it reads SAFFRLFRVMRLIKLLSRA. At 1251 to 1268 the chain is on the cytoplasmic side; sequence EGVRTLLWTFIKSFQALP. A helical membrane pass occupies residues 1269 to 1289; the sequence is YVALLIVMLFFIYAVIGMQMF. The Extracellular portion of the chain corresponds to 1290–1311; it reads GKIALVDGTQINRNNNFQTFPQ. Positions 1312-1330 form an intramembrane region, pore-forming; sequence AVLLLFRCATGEAWQEILL. A Selectivity filter of repeat IV motif is present at residues 1321–1324; it reads TGEA. Residues 1331-1356 are Extracellular-facing; sequence ACSYGKLCDPESDYAPGEEYTCGTNF. The interval 1337–1403 is dihydropyridine binding; the sequence is LCDPESDYAP…LGPHHLDEFK (67 aa). A disulfide bridge connects residues C1338 and C1352. The phenylalkylamine binding stretch occupies residues 1349–1391; that stretch reads EYTCGTNFAYYYFISFYMLCAFLIINLFVAVIMDNFDYLTRDW. A helical membrane pass occupies residues 1357 to 1381; the sequence is AYYYFISFYMLCAFLIINLFVAVIM. The Cytoplasmic segment spans residues 1382–1873; sequence DNFDYLTRDW…SQETLIPPRP (492 aa). The interaction with calmodulin stretch occupies residues 1522–1542; sequence KFYATFLIQEHFRKFMKRQEE. S1575 carries the phosphoserine; by PKA and CAMK2 modification. Phosphothreonine; by CK2 is present on T1579. Phosphoserine; by PKA is present on S1617. 2 disordered regions span residues 1689-1782 and 1841-1873; these read EFPG…RPAP and GMASVPGSLSRRSSLGSLDQVQGSQETLIPPRP. The segment covering 1847-1858 has biased composition (low complexity); sequence GSLSRRSSLGSL.

It belongs to the calcium channel alpha-1 subunit (TC 1.A.1.11) family. CACNA1S subfamily. In terms of assembly, component of a calcium channel complex consisting of a pore-forming alpha subunit (CACNA1S) and the ancillary subunits CACNB1 or CACNB2, CACNG1 and CACNA2D1. The channel complex contains alpha, beta, gamma and delta subunits in a 1:1:1:1 ratio, i.e. it contains either CACNB1 or CACNB2. CACNA1S channel activity is modulated by the auxiliary subunits (CACNB1 or CACNB2, CACNG1 and CACNA2D1). Interacts with DYSF and JSRP1. Interacts with RYR1. Interacts with STAC, STAC2 and STAC3 (via their SH3 domains). Interaction with STAC3 promotes expression at the cell membrane. Interaction with STAC2 promotes expression at the cell membrane, but with much lower efficiency than STAC3. Interaction with STAC1 leads to very low levels expression at the cell membrane, much less than the levels observed upon interaction with STAC3 and STAC2. Interacts with CALM. The alpha-1S subunit is found in two isoforms in the skeletal muscle: a minor form of 212 kDa containing the complete amino acid sequence, and a major form of 190 kDa derived from the full-length form by post-translational proteolysis close to Phe-1690. Post-translationally, phosphorylated. Phosphorylation by PKA activates the calcium channel. Both the minor and major forms are phosphorylated in vitro by PKA. Phosphorylation at Ser-1575 is involved in beta-adrenergic-mediated regulation of the channel. Detected in skeletal muscle T-tubules (at protein level).

Its subcellular location is the cell membrane. It localises to the sarcolemma. The protein resides in the T-tubule. It carries out the reaction Ca(2+)(in) = Ca(2+)(out). Its activity is regulated as follows. Channel activity is blocked by dihydropyridines (DHP), phenylalkylamines, and by benzothiazepines. In terms of biological role, pore-forming, alpha-1S subunit of the voltage-gated calcium channel that gives rise to L-type calcium currents in skeletal muscle. Calcium channels containing the alpha-1S subunit play an important role in excitation-contraction coupling in skeletal muscle via their interaction with RYR1, which triggers Ca(2+) release from the sarcplasmic reticulum and ultimately results in muscle contraction. Long-lasting (L-type) calcium channels belong to the 'high-voltage activated' (HVA) group. This is Voltage-dependent L-type calcium channel subunit alpha-1S (CACNA1S) from Oryctolagus cuniculus (Rabbit).